The chain runs to 302 residues: Sulfate adenylyltransferase subunit 2 (302 aa).

This sequence belongs to the PAPS reductase family. CysD subfamily. Heterodimer composed of CysD, the smaller subunit, and CysN.

It carries out the reaction sulfate + ATP + H(+) = adenosine 5'-phosphosulfate + diphosphate. It participates in sulfur metabolism; hydrogen sulfide biosynthesis; sulfite from sulfate: step 1/3. In terms of biological role, with CysN forms the ATP sulfurylase (ATPS) that catalyzes the adenylation of sulfate producing adenosine 5'-phosphosulfate (APS) and diphosphate, the first enzymatic step in sulfur assimilation pathway. APS synthesis involves the formation of a high-energy phosphoric-sulfuric acid anhydride bond driven by GTP hydrolysis by CysN coupled to ATP hydrolysis by CysD. This chain is Sulfate adenylyltransferase subunit 2, found in Salmonella agona (strain SL483).